We begin with the raw amino-acid sequence, 268 residues long: Aliphatic sulfonates import ATP-binding protein SsuB 2 (268 aa).

Positions 15 to 236 (LAVRKLQKTF…VRGSHRLAAL (222 aa)) constitute an ABC transporter domain. 47 to 54 (GRSGCGKS) is a binding site for ATP.

Belongs to the ABC transporter superfamily. Aliphatic sulfonates importer (TC 3.A.1.17.2) family. The complex is composed of two ATP-binding proteins (SsuB), two transmembrane proteins (SsuC) and a solute-binding protein (SsuA).

The protein localises to the cell inner membrane. It carries out the reaction ATP + H2O + aliphatic sulfonate-[sulfonate-binding protein]Side 1 = ADP + phosphate + aliphatic sulfonateSide 2 + [sulfonate-binding protein]Side 1.. In terms of biological role, part of the ABC transporter complex SsuABC involved in aliphatic sulfonates import. Responsible for energy coupling to the transport system. The protein is Aliphatic sulfonates import ATP-binding protein SsuB 2 of Pseudomonas fluorescens (strain ATCC BAA-477 / NRRL B-23932 / Pf-5).